A 310-amino-acid chain; its full sequence is Thiamine-monophosphate kinase (310 aa).

4 residues coordinate Mg(2+): Asp-26, Thr-40, Ser-41, and Asp-42. Asp-49 serves as a coordination point for substrate. Residues Asp-70 and Asp-118 each contribute to the Mg(2+) site. Residues 117–118 (GD) and Arg-141 contribute to the ATP site. Asp-202 is a Mg(2+) binding site. Residue Ser-204 coordinates ATP. Mg(2+) is bound at residue Asp-205. Substrate contacts are provided by Glu-251 and Trp-299.

This sequence belongs to the thiamine-monophosphate kinase family.

The enzyme catalyses thiamine phosphate + ATP = thiamine diphosphate + ADP. Its pathway is cofactor biosynthesis; thiamine diphosphate biosynthesis; thiamine diphosphate from thiamine phosphate: step 1/1. Catalyzes the ATP-dependent phosphorylation of thiamine-monophosphate (TMP) to form thiamine-pyrophosphate (TPP), the active form of vitamin B1. The sequence is that of Thiamine-monophosphate kinase from Pyrococcus abyssi (strain GE5 / Orsay).